Reading from the N-terminus, the 81-residue chain is Large ribosomal subunit protein bL27 (81 aa).

Residues 1–11 (MATSKSGGSSK) are compositionally biased toward polar residues. Residues 1-21 (MATSKSGGSSKNGRDSISKRL) are disordered.

Belongs to the bacterial ribosomal protein bL27 family.

The protein is Large ribosomal subunit protein bL27 of Borrelia hermsii (strain HS1 / DAH).